The primary structure comprises 350 residues: GDSL esterase/lipase At2g42990 (350 aa).

The signal sequence occupies residues 1–24 (MATHYLSPSILCIILTTLVSIAGA). Catalysis depends on Ser-35, which acts as the Nucleophile. 3 N-linked (GlcNAc...) asparagine glycosylation sites follow: Asn-98, Asn-117, and Asn-141. Active-site residues include Asp-325 and His-328.

It belongs to the 'GDSL' lipolytic enzyme family.

Its subcellular location is the secreted. The protein is GDSL esterase/lipase At2g42990 of Arabidopsis thaliana (Mouse-ear cress).